Consider the following 823-residue polypeptide: DNA mismatch repair protein MutS (823 aa).

605-612 (GPNMSGKS) provides a ligand contact to ATP.

It belongs to the DNA mismatch repair MutS family.

This protein is involved in the repair of mismatches in DNA. It is possible that it carries out the mismatch recognition step. This protein has a weak ATPase activity. This Fervidobacterium nodosum (strain ATCC 35602 / DSM 5306 / Rt17-B1) protein is DNA mismatch repair protein MutS.